The chain runs to 347 residues: FK506-binding protein-like (347 aa).

The interval 1–24 is disordered; it reads METSPISPMNEKNTAQPQQREENA. T3 bears the Phosphothreonine mark. TPR repeat units lie at residues 208 to 241, 250 to 283, and 284 to 317; these read AKEE…LLTL, TTLY…EPGH, and LKAL…DPKN.

Forms a ternary complex with CDKN1A/p21 and HSP90AB1/Hsp90.

Functionally, may be involved in response to X-ray. Regulates p21 protein stability by binding to Hsp90 and p21. The polypeptide is FK506-binding protein-like (Fkbpl) (Mus musculus (Mouse)).